The primary structure comprises 481 residues: Small ribosomal subunit protein bS1 (481 aa).

S1 motif domains are found at residues 36-105 (GDIV…LSKK), 123-188 (DEAV…LSRR), 209-277 (GTIR…LSLK), and 294-363 (GQIV…LSLK). The segment at 429–467 (TAQMEKFAAAEAAGRGADDQSSASSAPSEKTAGGSLASD) is disordered. Residues 437-456 (AAEAAGRGADDQSSASSAPS) are compositionally biased toward low complexity.

This sequence belongs to the bacterial ribosomal protein bS1 family.

Its function is as follows. Binds mRNA; thus facilitating recognition of the initiation point. It is needed to translate mRNA with a short Shine-Dalgarno (SD) purine-rich sequence. The polypeptide is Small ribosomal subunit protein bS1 (rpsA) (Mycobacterium tuberculosis (strain CDC 1551 / Oshkosh)).